Consider the following 146-residue polypeptide: VHLTADEKAAVTALWGKVNVDEVGGEALGRLLVVYPWTQRFFDSFGDLSSPDAVMGNPKVKAHGKKVLNSFSDGLKNLDNLKGTFAKLSELHCDKLHVDPENFKLLGNVLVCVLAHHFGKEFTPQVQAAYQKVVAGVANALAHKYH.

V1 carries the N-acetylvaline modification. The 145-residue stretch at 2–146 (HLTADEKAAV…VANALAHKYH (145 aa)) folds into the Globin domain. T12 bears the Phosphothreonine mark. Phosphoserine is present on S44. K59 carries the N6-acetyllysine modification. Heme b is bound at residue H63. K82 carries the post-translational modification N6-acetyllysine. Heme b is bound at residue H92. C93 carries the S-nitrosocysteine modification. Residue K144 is modified to N6-acetyllysine.

It belongs to the globin family. In terms of assembly, heterotetramer of two alpha chains and two beta chains. In terms of tissue distribution, red blood cells.

Functionally, involved in oxygen transport from the lung to the various peripheral tissues. The protein is Hemoglobin subunit beta (HBB) of Odobenus rosmarus divergens (Pacific walrus).